The following is a 528-amino-acid chain: MGHLHIVHWRLTMNGAIAALFLCLVMVHQQHAVRILAVFPTPAYSHHSVFKVYIEALAERGHDVVVIKSTDRINYANRNGLRGNVSEIDASLSQEYYGRLMRHAGVFRKRGIVADSSTVTAHNYMGLVRMMSDQFDLPIVKSFIEEAHKHKFDLLITEAYIDYPLVFSHLFGDLPVVQISSGYAVAENFETMGAVSRHPVYYPNLWRDKFSGLNVWKQSMKCTLSWRYRMNLVNWPDEQNALLKRQFGESTPTIQELRNRVELLFVNTHAIFDNNRPVPPSVQYLGALHLHDKRPDSMYGMVREFLDNATTGAIYVSFGSAISSEDMEPEFIEMLLRVFEKLPYSILWKYDGYMNRMPANVFVQSWFEQYNLLHHKNVRAFVTQGGVQSTDEAVEAIVPMVGMPMMGDQAYNMNKIVELGLGKVVDTVRVNAEQLIEAIVDVAESPKYRKRLRELRHMIHHQPMTPLQKAVWYTEHVIESRRRVVPTMLKTRAANVNYSDYIMSYVFVPFIMFTVMNHLRQLLKMNMV.

The signal sequence occupies residues 1–32 (MGHLHIVHWRLTMNGAIAALFLCLVMVHQQHA).

This sequence belongs to the UDP-glycosyltransferase family.

Catalyzes the transfer of glucose from UDP-glucose to ecdysteroids which are insect molting hormones. Expression of egt interferes with normal insect development and block molting. The sequence is that of Ecdysteroid UDP-glucosyltransferase (EGT) from Mamestra brassicae nuclear polyhedrosis virus (MbNPV).